The sequence spans 83 residues: MRSSSKKIDPSVHVLVPKHEVLSVEEAFKVLKELGIGPEQLPWMRASDPMARTINAKPGDIVKITRKSPIVGELVVYRYVVSG.

Belongs to the archaeal Rpo5/eukaryotic RPB5 RNA polymerase subunit family. In terms of assembly, part of the RNA polymerase complex.

The protein resides in the cytoplasm. The enzyme catalyses RNA(n) + a ribonucleoside 5'-triphosphate = RNA(n+1) + diphosphate. Functionally, DNA-dependent RNA polymerase (RNAP) catalyzes the transcription of DNA into RNA using the four ribonucleoside triphosphates as substrates. This chain is DNA-directed RNA polymerase subunit Rpo5, found in Metallosphaera sedula (strain ATCC 51363 / DSM 5348 / JCM 9185 / NBRC 15509 / TH2).